Reading from the N-terminus, the 419-residue chain is Enolase (419 aa).

Q160 is a binding site for (2R)-2-phosphoglycerate. E204 acts as the Proton donor in catalysis. Residues D240, E283, and D309 each contribute to the Mg(2+) site. (2R)-2-phosphoglycerate is bound by residues K334, R363, S364, and K385. K334 serves as the catalytic Proton acceptor.

It belongs to the enolase family. The cofactor is Mg(2+).

The protein localises to the cytoplasm. The protein resides in the secreted. It is found in the cell surface. The catalysed reaction is (2R)-2-phosphoglycerate = phosphoenolpyruvate + H2O. It participates in carbohydrate degradation; glycolysis; pyruvate from D-glyceraldehyde 3-phosphate: step 4/5. Its function is as follows. Catalyzes the reversible conversion of 2-phosphoglycerate (2-PG) into phosphoenolpyruvate (PEP). It is essential for the degradation of carbohydrates via glycolysis. The sequence is that of Enolase from Pyrobaculum aerophilum (strain ATCC 51768 / DSM 7523 / JCM 9630 / CIP 104966 / NBRC 100827 / IM2).